The following is a 368-amino-acid chain: Glutamate 5-kinase (368 aa).

Position 9 (K9) interacts with ATP. Residues S49, D136, and N148 each coordinate substrate. ATP contacts are provided by residues 168 to 169 (TD) and 210 to 216 (TGGMMTK). In terms of domain architecture, PUA spans 275-353 (AGIITIDDGA…ADIENVLGYE (79 aa)).

It belongs to the glutamate 5-kinase family.

It is found in the cytoplasm. It catalyses the reaction L-glutamate + ATP = L-glutamyl 5-phosphate + ADP. It participates in amino-acid biosynthesis; L-proline biosynthesis; L-glutamate 5-semialdehyde from L-glutamate: step 1/2. Its function is as follows. Catalyzes the transfer of a phosphate group to glutamate to form L-glutamate 5-phosphate. The chain is Glutamate 5-kinase from Haemophilus influenzae (strain 86-028NP).